Reading from the N-terminus, the 57-residue chain is UPF0391 membrane protein BRADO2787 (57 aa).

2 helical membrane passes run 6 to 26 (WALL…TGVS) and 35 to 55 (ILFY…LTIF).

This sequence belongs to the UPF0391 family.

The protein localises to the cell membrane. This is UPF0391 membrane protein BRADO2787 from Bradyrhizobium sp. (strain ORS 278).